A 578-amino-acid polypeptide reads, in one-letter code: A-type ATP synthase subunit A (578 aa).

An ATP-binding site is contributed by 228–235 (GPFGSGKT).

This sequence belongs to the ATPase alpha/beta chains family. Has multiple subunits with at least A(3), B(3), C, D, E, F, H, I and proteolipid K(x).

Its subcellular location is the cell membrane. It carries out the reaction ATP + H2O + 4 H(+)(in) = ADP + phosphate + 5 H(+)(out). Its function is as follows. Component of the A-type ATP synthase that produces ATP from ADP in the presence of a proton gradient across the membrane. The A chain is the catalytic subunit. This chain is A-type ATP synthase subunit A, found in Methanosarcina acetivorans (strain ATCC 35395 / DSM 2834 / JCM 12185 / C2A).